The sequence spans 733 residues: Sulfate transporter (733 aa).

Positions 1–18 (MSLKNEEQNDLSPKDSVK) are enriched in basic and acidic residues. A disordered region spans residues 1–37 (MSLKNEEQNDLSPKDSVKGNDQYRAPSGIHLEREEES). Residues S12 and S16 each carry the phosphoserine modification. 2 helical membrane passes run 113-133 (VMSGLIVGILLVPQSIAYSLL) and 138-158 (PIYGLYTSFFASLIYFILGTS). The N-linked (GlcNAc...) asparagine glycan is linked to N194. 6 helical membrane-spanning segments follow: residues 214 to 234 (IIVGSTVTFVAGVYQVAMGFF), 237 to 257 (GFVSVYLSDALLGGFVTGASF), 379 to 399 (IDAIAIAIIGFAITVSLSEMF), 415 to 435 (AIGFCNIIPSFFHCFTTSAAL), 453 to 473 (VMTALVLLLVLLVIAPLFFSL), and 519 to 539 (LISTEIGLLTGVCFSMFCVIL). An STAS domain is found at 563-714 (AYKNLQAKSG…SVYEAMTFAE (152 aa)).

Belongs to the SLC26A/SulP transporter (TC 2.A.53) family. N-glycosylated.

It is found in the cell membrane. The protein localises to the apical cell membrane. It catalyses the reaction oxalate(in) + sulfate(out) = oxalate(out) + sulfate(in). The catalysed reaction is sulfate(out) + 2 chloride(in) = sulfate(in) + 2 chloride(out). It carries out the reaction oxalate(out) + 2 chloride(in) = oxalate(in) + 2 chloride(out). The enzyme catalyses bromide(in) + chloride(out) = bromide(out) + chloride(in). It catalyses the reaction nitrate(in) + chloride(out) = nitrate(out) + chloride(in). The catalysed reaction is iodide(in) + chloride(out) = iodide(out) + chloride(in). Its function is as follows. Sulfate transporter which mediates sulfate uptake into chondrocytes in order to maintain adequate sulfation of proteoglycans which is needed for cartilage development. Mediates electroneutral anion exchange of sulfate ions for oxalate ions, sulfate and oxalate ions for chloride and/or hydroxyl ions and chloride ions for bromide, iodide and nitrate ions. The coupling of sulfate transport to both hydroxyl and chloride ions likely serves to ensure transport at both acidic pH when most sulfate uptake is mediated by sulfate-hydroxide exchange and alkaline pH when most sulfate uptake is mediated by sulfate-chloride exchange. Essential for chondrocyte proliferation, differentiation and cell size expansion. This chain is Sulfate transporter (SLC26A2), found in Bubalus bubalis (Domestic water buffalo).